A 353-amino-acid chain; its full sequence is Photosystem II D2 protein (353 aa).

A helical membrane pass occupies residues 41–61; it reads TAYLALGGWLTGTTFVTSWYT. His118 is a chlorophyll a binding site. A helical transmembrane segment spans residues 125 to 141; it reads GFMLRQFEISRLVGIRP. The pheophytin a site is built by Gln130 and Asn143. A helical membrane pass occupies residues 153 to 166; it reads VFVSVFLMYPLGQS. Residue His198 coordinates chlorophyll a. A helical transmembrane segment spans residues 208 to 228; the sequence is GALLCAIHGATVENTLYEDGE. Residues His215 and Phe262 each coordinate a plastoquinone. His215 lines the Fe cation pocket. Residue His269 participates in Fe cation binding. Residues 279–295 traverse the membrane as a helical segment; the sequence is GLWTSSIGIIGLALNLR.

Belongs to the reaction center PufL/M/PsbA/D family. PSII is composed of 1 copy each of membrane proteins PsbA, PsbB, PsbC, PsbD, PsbE, PsbF, PsbH, PsbI, PsbJ, PsbK, PsbL, PsbM, PsbT, PsbX, PsbY, PsbZ, Psb30/Ycf12, peripheral proteins PsbO, CyanoQ (PsbQ), PsbU, PsbV and a large number of cofactors. It forms dimeric complexes. The D1/D2 heterodimer binds P680, chlorophylls that are the primary electron donor of PSII, and subsequent electron acceptors. It shares a non-heme iron and each subunit binds pheophytin, quinone, additional chlorophylls, carotenoids and lipids. There is also a Cl(-1) ion associated with D1 and D2, which is required for oxygen evolution. The PSII complex binds additional chlorophylls, carotenoids and specific lipids. serves as cofactor.

The protein localises to the host cellular thylakoid membrane. It carries out the reaction 2 a plastoquinone + 4 hnu + 2 H2O = 2 a plastoquinol + O2. Photosystem II (PSII) is a light-driven water:plastoquinone oxidoreductase that uses light energy to abstract electrons from H(2)O, generating O(2) and a proton gradient subsequently used for ATP formation. It consists of a core antenna complex that captures photons, and an electron transfer chain that converts photonic excitation into a charge separation. The D1/D2 (PsbA/PsbD) reaction center heterodimer binds P680, the primary electron donor of PSII as well as several subsequent electron acceptors. D2 is needed for assembly of a stable PSII complex. The sequence is that of Photosystem II D2 protein (psbD) from Synechococcus phage S-PM2.